The sequence spans 92 residues: Small ribosomal subunit protein uS19 (92 aa).

This sequence belongs to the universal ribosomal protein uS19 family.

In terms of biological role, protein S19 forms a complex with S13 that binds strongly to the 16S ribosomal RNA. This is Small ribosomal subunit protein uS19 from Buchnera aphidicola subsp. Schizaphis graminum (strain Sg).